Consider the following 275-residue polypeptide: 3-methyl-2-oxobutanoate hydroxymethyltransferase (275 aa).

Positions 49 and 88 each coordinate Mg(2+). 3-methyl-2-oxobutanoate-binding positions include 49 to 50, D88, and K118; that span reads DS. E120 contacts Mg(2+). E187 serves as the catalytic Proton acceptor.

Belongs to the PanB family. As to quaternary structure, homodecamer; pentamer of dimers. Mg(2+) is required as a cofactor.

The protein resides in the cytoplasm. The catalysed reaction is 3-methyl-2-oxobutanoate + (6R)-5,10-methylene-5,6,7,8-tetrahydrofolate + H2O = 2-dehydropantoate + (6S)-5,6,7,8-tetrahydrofolate. The protein operates within cofactor biosynthesis; (R)-pantothenate biosynthesis; (R)-pantoate from 3-methyl-2-oxobutanoate: step 1/2. In terms of biological role, catalyzes the reversible reaction in which hydroxymethyl group from 5,10-methylenetetrahydrofolate is transferred onto alpha-ketoisovalerate to form ketopantoate. The protein is 3-methyl-2-oxobutanoate hydroxymethyltransferase of Nitrobacter hamburgensis (strain DSM 10229 / NCIMB 13809 / X14).